The following is a 134-amino-acid chain: UPF0412 protein YaaI (134 aa).

Positions 1–23 (MKSVFTLSASLAISLMLCCTAQA) are cleaved as a signal peptide.

This sequence belongs to the UPF0412 family.

In Escherichia coli O17:K52:H18 (strain UMN026 / ExPEC), this protein is UPF0412 protein YaaI.